The primary structure comprises 129 residues: uncharacterized protein (129 aa).

Residues 103-125 (AISSAFQYGLSTSNFFFIFLYIF) traverse the membrane as a helical segment.

The protein resides in the membrane. This is an uncharacterized protein from Acanthamoeba polyphaga (Amoeba).